Here is a 1052-residue protein sequence, read N- to C-terminus: Kinesin-like protein KIF11 (1052 aa).

One can recognise a Kinesin motor domain in the interval N17–I358. An ATP-binding site is contributed by G104–T111. N6-acetyllysine is present on K145. Positions V364–E478 form a coiled coil. Residue T457 is modified to Phosphothreonine. A Glycyl lysine isopeptide (Lys-Gly) (interchain with G-Cter in SUMO2) cross-link involves residue K476. T925 carries the phosphothreonine modification. 2 disordered regions span residues L950–V1026 and E1033–L1052. The stretch at E963–S988 forms a coiled coil. Over residues K1016–V1026 the composition is skewed to basic and acidic residues.

Belongs to the TRAFAC class myosin-kinesin ATPase superfamily. Kinesin family. BimC subfamily. As to quaternary structure, interacts with the thyroid hormone receptor in the presence of thyroid hormone. Component of a large chromatin remodeling complex, at least composed of MYSM1, PCAF, RBM10 and KIF11/TRIP5. Interacts with RARRES1 and AGBL2. Post-translationally, phosphorylated exclusively on serine during S phase, but on both serine and Thr-925 during mitosis, so controlling the association of KIF11 with the spindle apparatus (probably during early prophase).

Its subcellular location is the cytoplasm. The protein localises to the cytoskeleton. It is found in the spindle pole. Its function is as follows. Motor protein required for establishing a bipolar spindle during mitosis. Required in non-mitotic cells for transport of secretory proteins from the Golgi complex to the cell surface. This is Kinesin-like protein KIF11 (Kif11) from Mus musculus (Mouse).